The chain runs to 122 residues: Large ribosomal subunit protein uL14 (122 aa).

Belongs to the universal ribosomal protein uL14 family. In terms of assembly, part of the 50S ribosomal subunit. Forms a cluster with proteins L3 and L19. In the 70S ribosome, L14 and L19 interact and together make contacts with the 16S rRNA in bridges B5 and B8.

In terms of biological role, binds to 23S rRNA. Forms part of two intersubunit bridges in the 70S ribosome. The sequence is that of Large ribosomal subunit protein uL14 from Thermomicrobium roseum (strain ATCC 27502 / DSM 5159 / P-2).